The following is an 89-amino-acid chain: Small ribosomal subunit protein uS14A (89 aa).

Belongs to the universal ribosomal protein uS14 family. As to quaternary structure, part of the 30S ribosomal subunit. Contacts proteins S3 and S10.

Functionally, binds 16S rRNA, required for the assembly of 30S particles and may also be responsible for determining the conformation of the 16S rRNA at the A site. The sequence is that of Small ribosomal subunit protein uS14A from Staphylococcus aureus (strain MRSA252).